Here is a 398-residue protein sequence, read N- to C-terminus: 2-amino-3-ketobutyrate coenzyme A ligase (398 aa).

111–112 (CF) contributes to the pyridoxal 5'-phosphate binding site. A substrate-binding site is contributed by H136. Pyridoxal 5'-phosphate contacts are provided by residues S185, 210 to 213 (DDSH), 241 to 244 (TLGK), and 274 to 275 (SN). K244 is modified (N6-(pyridoxal phosphate)lysine). Substrate is bound at residue R368.

Belongs to the class-II pyridoxal-phosphate-dependent aminotransferase family. In terms of assembly, homodimer. It depends on pyridoxal 5'-phosphate as a cofactor.

The enzyme catalyses glycine + acetyl-CoA = (2S)-2-amino-3-oxobutanoate + CoA. It functions in the pathway amino-acid degradation; L-threonine degradation via oxydo-reductase pathway; glycine from L-threonine: step 2/2. In terms of biological role, catalyzes the cleavage of 2-amino-3-ketobutyrate to glycine and acetyl-CoA. The protein is 2-amino-3-ketobutyrate coenzyme A ligase of Escherichia coli (strain K12).